Consider the following 186-residue polypeptide: Ribosome-recycling factor (186 aa).

Belongs to the RRF family.

It localises to the cytoplasm. Its function is as follows. Responsible for the release of ribosomes from messenger RNA at the termination of protein biosynthesis. May increase the efficiency of translation by recycling ribosomes from one round of translation to another. This Chlorobium phaeobacteroides (strain BS1) protein is Ribosome-recycling factor.